The chain runs to 1205 residues: Plasma membrane calcium-transporting ATPase 1 (1205 aa).

Residues 2–104 are Cytoplasmic-facing; sequence GDMANNSVAY…KTFLQLVWEA (103 aa). The interval 94-111 is calmodulin-binding subdomain A; sequence PKTFLQLVWEALQDVTLI. The chain crosses the membrane as a helical span at residues 105 to 125; that stretch reads LQDVTLIILEIAAVVSLGLSF. Residues 126-153 are Extracellular-facing; sequence YQPPGGNEALCGSVNVGEEEEESEAGWI. The helical transmembrane segment at 154–174 threads the bilayer; sequence EGAAILLSVVCVVLVTAFNDW. Over 175 to 351 the chain is Cytoplasmic; the sequence is SKEKQFRGLQ…KEKSVLQGKL (177 aa). The interval 296–343 is disordered; that stretch reads EEEKEKEKKDKKTKAQDGAAMEMQPLKSEDGVDGDEKDKKRSNLPKKE. 2 stretches are compositionally biased toward basic and acidic residues: residues 300–310 and 322–343; these read EKEKKDKKTKA and KSED…PKKE. The chain crosses the membrane as a helical span at residues 352–371; sequence TKLAVQIGKAGLLMSAITVI. The Extracellular portion of the chain corresponds to 372–403; that stretch reads ILVLYFVIDTSWVQKRPWLAECTPIYIQYFVK. Residues 404–424 traverse the membrane as a helical segment; that stretch reads FFIIGVTVLVVAVPEGLPLAV. Over 425–840 the chain is Cytoplasmic; that stretch reads TISLAYSVKK…RNVYDSISKF (416 aa). Asp-460 serves as the catalytic 4-aspartylphosphate intermediate. Residues Asp-460, Thr-462, and Asp-782 each contribute to the Mg(2+) site. Residues 841–861 form a helical membrane-spanning segment; sequence LQFQLTVNVVAVIVAFTGACI. The Extracellular portion of the chain corresponds to 862–868; sequence TQDSPLK. Residues 869 to 889 form a helical membrane-spanning segment; it reads AVQMLWVNLIMDTLASLALAT. The Cytoplasmic portion of the chain corresponds to 890-912; it reads EPPTEALLLRKPYGRNKPLISRT. The helical transmembrane segment at 913 to 933 threads the bilayer; sequence MMKNILGHAFYQLVVVFTLLF. The Extracellular segment spans residues 934-956; sequence AGEKIFDIDSGRNAPLHAPPSEH. The helical transmembrane segment at 957 to 976 threads the bilayer; that stretch reads YTIVFNTFVMMQLFNEINAR. The Cytoplasmic segment spans residues 977–990; it reads KIHGERNVFEGIFN. Residues 991-1012 traverse the membrane as a helical segment; the sequence is NAIFCTIVLGTFVVQIIIVQFG. At 1013-1024 the chain is on the extracellular side; sequence GKPFSCSKLSIE. Residues 1025–1045 form a helical membrane-spanning segment; it reads QWLWSVFLGMGTLLWGQLIST. The Cytoplasmic segment spans residues 1046–1205; the sequence is IPTSRLKFLK…SPLHSLETSL (160 aa). The residue at position 1101 (Thr-1101) is a Phosphothreonine; by PKC. The disordered stretch occupies residues 1145–1205; it reads PLIDDTDAED…SPLHSLETSL (61 aa). A compositionally biased stretch (polar residues) spans 1183 to 1205; sequence TDMNKSATSSSPGSPLHSLETSL.

It belongs to the cation transport ATPase (P-type) (TC 3.A.3) family. Type IIB subfamily.

It localises to the cell membrane. The catalysed reaction is Ca(2+)(in) + ATP + H2O = Ca(2+)(out) + ADP + phosphate + H(+). Catalyzes the hydrolysis of ATP coupled with the transport of calcium from the cytoplasm to the extracellular space thereby maintaining intracellular calcium homeostasis. In Gallus gallus (Chicken), this protein is Plasma membrane calcium-transporting ATPase 1.